A 361-amino-acid chain; its full sequence is tRNA-specific 2-thiouridylase MnmA (361 aa).

ATP contacts are provided by residues 8-15 (GMSGGVDS) and Met34. Residues 94 to 96 (NPD) are interaction with target base in tRNA. Residue Cys99 is the Nucleophile of the active site. Cys99 and Cys195 are disulfide-bonded. Gly123 lines the ATP pocket. Residues 145 to 147 (KDQ) are interaction with tRNA. Cys195 acts as the Cysteine persulfide intermediate in catalysis. Positions 307–308 (RY) are interaction with tRNA.

Belongs to the MnmA/TRMU family.

The protein resides in the cytoplasm. It catalyses the reaction S-sulfanyl-L-cysteinyl-[protein] + uridine(34) in tRNA + AH2 + ATP = 2-thiouridine(34) in tRNA + L-cysteinyl-[protein] + A + AMP + diphosphate + H(+). In terms of biological role, catalyzes the 2-thiolation of uridine at the wobble position (U34) of tRNA, leading to the formation of s(2)U34. The chain is tRNA-specific 2-thiouridylase MnmA from Legionella pneumophila (strain Paris).